Here is a 524-residue protein sequence, read N- to C-terminus: Lysine--tRNA ligase (524 aa).

Mg(2+)-binding residues include Glu-431 and Glu-438.

The protein belongs to the class-II aminoacyl-tRNA synthetase family. As to quaternary structure, homodimer. The cofactor is Mg(2+).

Its subcellular location is the cytoplasm. The catalysed reaction is tRNA(Lys) + L-lysine + ATP = L-lysyl-tRNA(Lys) + AMP + diphosphate. This Chlamydia muridarum (strain MoPn / Nigg) protein is Lysine--tRNA ligase (lysS).